Here is a 356-residue protein sequence, read N- to C-terminus: tRNA N6-adenosine threonylcarbamoyltransferase (356 aa).

Histidine 115 and histidine 119 together coordinate Fe cation. Residues 139 to 143 (LVSGG), aspartate 173, glycine 186, aspartate 190, and asparagine 291 each bind substrate. Position 319 (aspartate 319) interacts with Fe cation.

The protein belongs to the KAE1 / TsaD family. It depends on Fe(2+) as a cofactor.

The protein resides in the cytoplasm. The catalysed reaction is L-threonylcarbamoyladenylate + adenosine(37) in tRNA = N(6)-L-threonylcarbamoyladenosine(37) in tRNA + AMP + H(+). Its function is as follows. Required for the formation of a threonylcarbamoyl group on adenosine at position 37 (t(6)A37) in tRNAs that read codons beginning with adenine. Is involved in the transfer of the threonylcarbamoyl moiety of threonylcarbamoyl-AMP (TC-AMP) to the N6 group of A37, together with TsaE and TsaB. TsaD likely plays a direct catalytic role in this reaction. In Arthrobacter sp. (strain FB24), this protein is tRNA N6-adenosine threonylcarbamoyltransferase.